A 156-amino-acid polypeptide reads, in one-letter code: Transcriptional repressor NrdR (156 aa).

The segment at 3–34 (CPKCNSTHSRVVDSRHADEVNAIRRRRECEEC) is a zinc-finger region. The 91-residue stretch at 49 to 139 (LIVVKKDGTR…VYKEFKDVDQ (91 aa)) folds into the ATP-cone domain.

Belongs to the NrdR family. Requires Zn(2+) as cofactor.

In terms of biological role, negatively regulates transcription of bacterial ribonucleotide reductase nrd genes and operons by binding to NrdR-boxes. This is Transcriptional repressor NrdR from Staphylococcus saprophyticus subsp. saprophyticus (strain ATCC 15305 / DSM 20229 / NCIMB 8711 / NCTC 7292 / S-41).